Here is a 427-residue protein sequence, read N- to C-terminus: uncharacterized protein (427 aa).

This is an uncharacterized protein from Human herpesvirus 7 (strain JI) (HHV-7).